A 433-amino-acid chain; its full sequence is Homoserine O-acetyltransferase (433 aa).

Residues 41–385 (NVVLVCHALT…HGHDAFLVEP (345 aa)) enclose the AB hydrolase-1 domain. Positions 55–74 (VARSPAPERNEGTRGAGQAG) are disordered. The active-site Nucleophile is the S166. Position 237 (R237) interacts with substrate. Catalysis depends on residues D345 and H378. A substrate-binding site is contributed by D379. Positions 403–433 (RAVSDDGGGGGNDSARPERDHAPVHASLFKG) are disordered.

This sequence belongs to the AB hydrolase superfamily. MetX family. Homodimer.

Its subcellular location is the cytoplasm. It carries out the reaction L-homoserine + acetyl-CoA = O-acetyl-L-homoserine + CoA. Its pathway is amino-acid biosynthesis; L-methionine biosynthesis via de novo pathway; O-acetyl-L-homoserine from L-homoserine: step 1/1. Its function is as follows. Transfers an acetyl group from acetyl-CoA to L-homoserine, forming acetyl-L-homoserine. The polypeptide is Homoserine O-acetyltransferase (Halorubrum lacusprofundi (strain ATCC 49239 / DSM 5036 / JCM 8891 / ACAM 34)).